The following is a 441-amino-acid chain: Ribosomal protein uS12 methylthiotransferase RimO (441 aa).

The 111-residue stretch at 8 to 118 folds into the MTTase N-terminal domain; sequence PKIGFVSLGC…VLEHVHHYVP (111 aa). 6 residues coordinate [4Fe-4S] cluster: C17, C53, C82, C150, C154, and C157. In terms of domain architecture, Radical SAM core spans 136-373; sequence LTPRHYAYLK…MQLQQQISAE (238 aa). Residues 376 to 441 enclose the TRAM domain; the sequence is QEKVGREILV…DEYDLWGSRV (66 aa).

It belongs to the methylthiotransferase family. RimO subfamily. It depends on [4Fe-4S] cluster as a cofactor.

The protein resides in the cytoplasm. It catalyses the reaction L-aspartate(89)-[ribosomal protein uS12]-hydrogen + (sulfur carrier)-SH + AH2 + 2 S-adenosyl-L-methionine = 3-methylsulfanyl-L-aspartate(89)-[ribosomal protein uS12]-hydrogen + (sulfur carrier)-H + 5'-deoxyadenosine + L-methionine + A + S-adenosyl-L-homocysteine + 2 H(+). Its function is as follows. Catalyzes the methylthiolation of an aspartic acid residue of ribosomal protein uS12. The chain is Ribosomal protein uS12 methylthiotransferase RimO from Shigella flexneri.